The sequence spans 112 residues: T cell receptor alpha variable 2 (112 aa).

An N-terminal signal peptide occupies residues 1 to 25; the sequence is MALQSTLGAVWLGLLLNSLWKVAES. The Ig-like domain occupies 26 to 112; the sequence is KDQVFQPSTV…DAAVYYCAVE (87 aa). C47 and C109 are joined by a disulfide. Residues N48 and N84 are each glycosylated (N-linked (GlcNAc...) asparagine).

Alpha-beta TR is a heterodimer composed of an alpha and beta chain; disulfide-linked. The alpha-beta TR is associated with the transmembrane signaling CD3 coreceptor proteins to form the TR-CD3 (TcR or TCR). The assembly of alpha-beta TR heterodimers with CD3 occurs in the endoplasmic reticulum where a single alpha-beta TR heterodimer associates with one CD3D-CD3E heterodimer, one CD3G-CD3E heterodimer and one CD247 homodimer forming a stable octameric structure. CD3D-CD3E and CD3G-CD3E heterodimers preferentially associate with TR alpha and TR beta chains, respectively. The association of the CD247 homodimer is the last step of TcR assembly in the endoplasmic reticulum and is required for transport to the cell surface.

It localises to the cell membrane. Functionally, v region of the variable domain of T cell receptor (TR) alpha chain that participates in the antigen recognition. Alpha-beta T cell receptors are antigen specific receptors which are essential to the immune response and are present on the cell surface of T lymphocytes. Recognize peptide-major histocompatibility (MH) (pMH) complexes that are displayed by antigen presenting cells (APC), a prerequisite for efficient T cell adaptive immunity against pathogens. Binding of alpha-beta TR to pMH complex initiates TR-CD3 clustering on the cell surface and intracellular activation of LCK that phosphorylates the ITAM motifs of CD3G, CD3D, CD3E and CD247 enabling the recruitment of ZAP70. In turn ZAP70 phosphorylates LAT, which recruits numerous signaling molecules to form the LAT signalosome. The LAT signalosome propagates signal branching to three major signaling pathways, the calcium, the mitogen-activated protein kinase (MAPK) kinase and the nuclear factor NF-kappa-B (NF-kB) pathways, leading to the mobilization of transcription factors that are critical for gene expression and essential for T cell growth and differentiation. The T cell repertoire is generated in the thymus, by V-(D)-J rearrangement. This repertoire is then shaped by intrathymic selection events to generate a peripheral T cell pool of self-MH restricted, non-autoaggressive T cells. Post-thymic interaction of alpha-beta TR with the pMH complexes shapes TR structural and functional avidity. This Homo sapiens (Human) protein is T cell receptor alpha variable 2.